The following is a 526-amino-acid chain: Dye-decolorizing peroxidase (526 aa).

The signal sequence occupies residues 1-21 (MRKSISTFILLSVLSVGQLVA). The propeptide occupies 22–63 (ARPRSTNAPPRRRTPQPRRTTSLFINPPALPDLPTVQAVDKL). A glycan (N-linked (GlcNAc...) asparagine) is linked at Asn186. Asp231 acts as the Proton acceptor in catalysis. Asn367 carries an N-linked (GlcNAc...) asparagine glycan. His376 contacts heme. Asn473 and Asn484 each carry an N-linked (GlcNAc...) asparagine glycan.

Belongs to the DyP-type peroxidase family. Heme b is required as a cofactor.

Its subcellular location is the secreted. The catalysed reaction is Reactive Blue 5 + 2 H2O2 = 2,2'-disulfonyl azobenzene + 3-[(4-amino-6-chloro-1,3,5-triazin-2-yl)amino]benzenesulfonate + phthalate + 2 H2O + 2 H(+). The enzyme catalyses 2 a phenolic donor + H2O2 = 2 a phenolic radical donor + 2 H2O. In terms of biological role, manganese-independent peroxidase that is able to convert a large number of compounds, but its physiological substrate is not known. In addition to classic peroxidase substrates (e.g. 2,6-dimethoxyphenol), oxidizes dyes such as Reactive Blue 5 and Reactive Black 5. In Mycena epipterygia (Yellow-stemmed mycena), this protein is Dye-decolorizing peroxidase.